We begin with the raw amino-acid sequence, 220 residues long: Protein-L-isoaspartate O-methyltransferase (220 aa).

Serine 68 is a catalytic residue.

Belongs to the methyltransferase superfamily. L-isoaspartyl/D-aspartyl protein methyltransferase family.

It localises to the cytoplasm. It catalyses the reaction [protein]-L-isoaspartate + S-adenosyl-L-methionine = [protein]-L-isoaspartate alpha-methyl ester + S-adenosyl-L-homocysteine. In terms of biological role, catalyzes the methyl esterification of L-isoaspartyl residues in peptides and proteins that result from spontaneous decomposition of normal L-aspartyl and L-asparaginyl residues. It plays a role in the repair and/or degradation of damaged proteins. The sequence is that of Protein-L-isoaspartate O-methyltransferase from Dictyoglomus thermophilum (strain ATCC 35947 / DSM 3960 / H-6-12).